The chain runs to 51 residues: ATP synthase subunit epsilon-like protein, mitochondrial (51 aa).

Position 21 is an N6-acetyllysine (lysine 21).

The protein belongs to the eukaryotic ATPase epsilon family. As to quaternary structure, F-type ATPases have 2 components, CF(1) - the catalytic core - and CF(0) - the membrane proton channel. CF(1) has five subunits: alpha(3), beta(3), gamma(1), delta(1), epsilon(1). CF(0) seems to have nine subunits: a, b, c, d, e, f, g, F6 and 8 (or A6L).

Its subcellular location is the mitochondrion inner membrane. Mitochondrial membrane ATP synthase (F(1)F(0) ATP synthase or Complex V) produces ATP from ADP in the presence of a proton gradient across the membrane which is generated by electron transport complexes of the respiratory chain. F-type ATPases consist of two structural domains, F(1) - containing the extramembraneous catalytic core, and F(0) - containing the membrane proton channel, linked together by a central stalk and a peripheral stalk. During catalysis, ATP synthesis in the catalytic domain of F(1) is coupled via a rotary mechanism of the central stalk subunits to proton translocation. Part of the complex F(1) domain and of the central stalk which is part of the complex rotary element. Rotation of the central stalk against the surrounding alpha(3)beta(3) subunits leads to hydrolysis of ATP in three separate catalytic sites on the beta subunits. This chain is ATP synthase subunit epsilon-like protein, mitochondrial, found in Homo sapiens (Human).